Consider the following 768-residue polypeptide: Photosystem I P700 chlorophyll a apoprotein A1 (768 aa).

8 helical membrane-spanning segments follow: residues 76–99, 162–185, 201–225, 310–328, 369–392, 408–434, 456–478, and 559–577; these read VFSA…FHGA, LMAL…YHYH, LNHH…HIGA, ISHH…GHLY, WHAQ…HHMY, LGLF…IAMI, ALIS…LYIH, and FMIH…LILL. Residues Cys601 and Cys610 each contribute to the [4Fe-4S] cluster site. 2 helical membrane-spanning segments follow: residues 617–638 and 682–704; these read HVFL…HFSW and ISMY…MFLF. Position 693 (His693) interacts with divinylchlorophyll a'. Met701 and Tyr709 together coordinate divinyl chlorophyll a. Trp710 is a binding site for phylloquinone. A helical transmembrane segment spans residues 742–762; that stretch reads AVGAAHFLLGGIATTWAFFHA.

It belongs to the PsaA/PsaB family. As to quaternary structure, the PsaA/B heterodimer binds the P700 divinyl chlorophyll special pair and subsequent electron acceptors. PSI consists of a core antenna complex that captures photons, and an electron transfer chain that converts photonic excitation into a charge separation. The cyanobacterial PSI reaction center is composed of one copy each of PsaA,B,C,D,E,F,I,J,K,L,M and X, and forms trimeric complexes. Requires PSI electron transfer chain: 5 divinyl chlorophyll a, 1 divinyl chlorophyll a', 2 phylloquinones and 3 4Fe-4S clusters. PSI core antenna: 90 divinyl chlorophyll a, 22 carotenoids, 3 phospholipids and 1 galactolipid. P700 is a divinyl chlorophyll a/divinyl chlorophyll a' dimer, A0 is one or more divinyl chlorophyll a, A1 is one or both phylloquinones and FX is a shared 4Fe-4S iron-sulfur center. as cofactor.

The protein localises to the cellular thylakoid membrane. The catalysed reaction is reduced [plastocyanin] + hnu + oxidized [2Fe-2S]-[ferredoxin] = oxidized [plastocyanin] + reduced [2Fe-2S]-[ferredoxin]. Its function is as follows. PsaA and PsaB bind P700, the primary electron donor of photosystem I (PSI), as well as the electron acceptors A0, A1 and FX. PSI is a plastocyanin/cytochrome c6-ferredoxin oxidoreductase, converting photonic excitation into a charge separation, which transfers an electron from the donor P700 chlorophyll pair to the spectroscopically characterized acceptors A0, A1, FX, FA and FB in turn. Oxidized P700 is reduced on the lumenal side of the thylakoid membrane by plastocyanin or cytochrome c6. The polypeptide is Photosystem I P700 chlorophyll a apoprotein A1 (Prochlorococcus marinus (strain NATL1A)).